The following is a 179-amino-acid chain: GTP-dependent dephospho-CoA kinase (179 aa).

5 residues coordinate GTP: Asp55, Val57, Asp74, Lys76, and Glu128.

It belongs to the GTP-dependent DPCK family.

The catalysed reaction is 3'-dephospho-CoA + GTP = GDP + CoA + H(+). Its pathway is cofactor biosynthesis; coenzyme A biosynthesis. In terms of biological role, catalyzes the GTP-dependent phosphorylation of the 3'-hydroxyl group of dephosphocoenzyme A to form coenzyme A (CoA). This is GTP-dependent dephospho-CoA kinase from Saccharolobus islandicus (strain M.16.27) (Sulfolobus islandicus).